The following is a 302-amino-acid chain: Ornithine carbamoyltransferase (302 aa).

Carbamoyl phosphate is bound by residues 52-55 (STRT), glutamine 79, arginine 103, and 130-133 (HPCQ). L-ornithine contacts are provided by residues asparagine 161, aspartate 222, and 226–227 (SM). Residues 262 to 263 (CL) and arginine 290 each bind carbamoyl phosphate.

The protein belongs to the aspartate/ornithine carbamoyltransferase superfamily. OTCase family.

It is found in the cytoplasm. It catalyses the reaction carbamoyl phosphate + L-ornithine = L-citrulline + phosphate + H(+). The protein operates within amino-acid biosynthesis; L-arginine biosynthesis; L-arginine from L-ornithine and carbamoyl phosphate: step 1/3. Its function is as follows. Reversibly catalyzes the transfer of the carbamoyl group from carbamoyl phosphate (CP) to the N(epsilon) atom of ornithine (ORN) to produce L-citrulline. The polypeptide is Ornithine carbamoyltransferase (Syntrophus aciditrophicus (strain SB)).